The primary structure comprises 294 residues: MRTEYADRLPVDWRDYVELCKPRVVLLMLLTVIVGMYLAAPGWVSLRLIAFTLLGIGLCAGSAAAINHLVDRHIDSIMARTKKRPVAYGRVSVKQALWFAVIIGLMGLSLLILFVNQLTALLTFITLIGYAGVYTGYLKRATSQNIVIGGLAGAAPPLLGWTAVTDQLDPQALLLVLIIFTWTPPHFWALAIYRYKEYQDAEIPMLPVTHGIQFTKLNIYLYTVLLLVVSLLPFVVSMSGWIYLLGALILGIRFLVWAHKLYFTDKPVVAMQTFRFSILYLMLLFVFLLVDHYF.

Transmembrane regions (helical) follow at residues 24 to 44 (VVLL…PGWV), 48 to 68 (LIAF…AINH), 96 to 116 (ALWF…LFVN), 118 to 138 (LTAL…TGYL), 145 to 165 (NIVI…TAVT), 172 to 192 (ALLL…ALAI), 211 to 231 (GIQF…VVSL), 241 to 263 (WIYL…KLYF), and 268 to 288 (VVAM…FVFL).

Belongs to the UbiA prenyltransferase family. Protoheme IX farnesyltransferase subfamily.

Its subcellular location is the cell inner membrane. The catalysed reaction is heme b + (2E,6E)-farnesyl diphosphate + H2O = Fe(II)-heme o + diphosphate. The protein operates within porphyrin-containing compound metabolism; heme O biosynthesis; heme O from protoheme: step 1/1. In terms of biological role, converts heme B (protoheme IX) to heme O by substitution of the vinyl group on carbon 2 of heme B porphyrin ring with a hydroxyethyl farnesyl side group. This Legionella pneumophila (strain Lens) protein is Protoheme IX farnesyltransferase.